Consider the following 262-residue polypeptide: Thiamine thiazole synthase (262 aa).

Residues A36, 55–56, G63, V127, and 154–156 contribute to the NAD(+) site; these read EK and HVD. Fe cation contacts are provided by D156 and H171. M224 contributes to the NAD(+) binding site. R234 provides a ligand contact to glycine.

Belongs to the THI4 family. In terms of assembly, homooctamer; tetramer of dimers. Fe(2+) is required as a cofactor.

It carries out the reaction hydrogen sulfide + glycine + NAD(+) = ADP-5-ethyl-4-methylthiazole-2-carboxylate + nicotinamide + 3 H2O + H(+). The protein operates within cofactor biosynthesis; thiamine diphosphate biosynthesis. Its function is as follows. Involved in the biosynthesis of the thiazole moiety of thiamine. Catalyzes the conversion of NAD and glycine to adenosine diphosphate 5-(2-hydroxyethyl)-4-methylthiazole-2-carboxylate (ADT), an adenylated thiazole intermediate, using free sulfide as a source of sulfur. This is Thiamine thiazole synthase from Methanothrix thermoacetophila (strain DSM 6194 / JCM 14653 / NBRC 101360 / PT) (Methanosaeta thermophila).